The following is a 275-amino-acid chain: tRNA pseudouridine synthase A (275 aa).

D62 serves as the catalytic Nucleophile. Y124 serves as a coordination point for substrate.

The protein belongs to the tRNA pseudouridine synthase TruA family. Homodimer.

It carries out the reaction uridine(38/39/40) in tRNA = pseudouridine(38/39/40) in tRNA. Its function is as follows. Formation of pseudouridine at positions 38, 39 and 40 in the anticodon stem and loop of transfer RNAs. This chain is tRNA pseudouridine synthase A, found in Herminiimonas arsenicoxydans.